The sequence spans 249 residues: NADH-quinone oxidoreductase subunit C (249 aa).

It belongs to the complex I 30 kDa subunit family. NDH-1 is composed of 14 different subunits. Subunits NuoB, C, D, E, F, and G constitute the peripheral sector of the complex.

It is found in the cell inner membrane. It catalyses the reaction a quinone + NADH + 5 H(+)(in) = a quinol + NAD(+) + 4 H(+)(out). In terms of biological role, NDH-1 shuttles electrons from NADH, via FMN and iron-sulfur (Fe-S) centers, to quinones in the respiratory chain. The immediate electron acceptor for the enzyme in this species is believed to be ubiquinone. Couples the redox reaction to proton translocation (for every two electrons transferred, four hydrogen ions are translocated across the cytoplasmic membrane), and thus conserves the redox energy in a proton gradient. The protein is NADH-quinone oxidoreductase subunit C of Xylella fastidiosa (strain M12).